The following is a 418-amino-acid chain: Glutamyl-tRNA reductase (418 aa).

Substrate is bound by residues 49 to 52, Ser109, 114 to 116, and Gln120; these read TCNR and EPQ. Catalysis depends on Cys50, which acts as the Nucleophile. 189-194 is a binding site for NADP(+); the sequence is GAGETI.

It belongs to the glutamyl-tRNA reductase family. As to quaternary structure, homodimer.

It carries out the reaction (S)-4-amino-5-oxopentanoate + tRNA(Glu) + NADP(+) = L-glutamyl-tRNA(Glu) + NADPH + H(+). The protein operates within porphyrin-containing compound metabolism; protoporphyrin-IX biosynthesis; 5-aminolevulinate from L-glutamyl-tRNA(Glu): step 1/2. In terms of biological role, catalyzes the NADPH-dependent reduction of glutamyl-tRNA(Glu) to glutamate 1-semialdehyde (GSA). The sequence is that of Glutamyl-tRNA reductase from Shigella dysenteriae serotype 1 (strain Sd197).